Consider the following 390-residue polypeptide: Acetylornithine aminotransferase (390 aa).

Residues 103–104 (GT) and phenylalanine 129 each bind pyridoxal 5'-phosphate. Arginine 132 contacts N(2)-acetyl-L-ornithine. 214–217 (DEVQ) lines the pyridoxal 5'-phosphate pocket. Lysine 243 bears the N6-(pyridoxal phosphate)lysine mark. Serine 271 is a binding site for N(2)-acetyl-L-ornithine. Position 272 (threonine 272) interacts with pyridoxal 5'-phosphate. Lysine 304 participates in a covalent cross-link: Isoglutamyl lysine isopeptide (Lys-Gln) (interchain with Q-Cter in protein Pup).

The protein belongs to the class-III pyridoxal-phosphate-dependent aminotransferase family. ArgD subfamily. As to quaternary structure, homodimer. Pyridoxal 5'-phosphate is required as a cofactor.

The protein resides in the cytoplasm. The enzyme catalyses N(2)-acetyl-L-ornithine + 2-oxoglutarate = N-acetyl-L-glutamate 5-semialdehyde + L-glutamate. It functions in the pathway amino-acid biosynthesis; L-arginine biosynthesis; N(2)-acetyl-L-ornithine from L-glutamate: step 4/4. The polypeptide is Acetylornithine aminotransferase (Mycolicibacterium smegmatis (strain ATCC 700084 / mc(2)155) (Mycobacterium smegmatis)).